A 562-amino-acid polypeptide reads, in one-letter code: NAD-dependent malic enzyme (562 aa).

Tyrosine 101 serves as the catalytic Proton donor. Arginine 154 provides a ligand contact to NAD(+). Lysine 172 acts as the Proton acceptor in catalysis. Residues glutamate 243, aspartate 244, and aspartate 267 each coordinate a divalent metal cation. The NAD(+) site is built by aspartate 267 and asparagine 415.

It belongs to the malic enzymes family. Homotetramer. Mg(2+) is required as a cofactor. Mn(2+) serves as cofactor.

The catalysed reaction is (S)-malate + NAD(+) = pyruvate + CO2 + NADH. It carries out the reaction oxaloacetate + H(+) = pyruvate + CO2. The sequence is that of NAD-dependent malic enzyme from Idiomarina loihiensis (strain ATCC BAA-735 / DSM 15497 / L2-TR).